Consider the following 217-residue polypeptide: Large ribosomal subunit protein uL3 (217 aa).

The protein belongs to the universal ribosomal protein uL3 family. In terms of assembly, part of the 50S ribosomal subunit. Forms a cluster with proteins L14 and L19.

In terms of biological role, one of the primary rRNA binding proteins, it binds directly near the 3'-end of the 23S rRNA, where it nucleates assembly of the 50S subunit. This is Large ribosomal subunit protein uL3 from Mycobacterium leprae (strain TN).